Consider the following 416-residue polypeptide: Enterobactin exporter EntS (416 aa).

Over 1-21 (MNKQSWLLNLSLLKTHPAFRA) the chain is Cytoplasmic. A helical transmembrane segment spans residues 22-42 (VFLARFISIVSLGLLGVAVPV). Topologically, residues 43-55 (QIQMMTHSTWQVG) are periplasmic. A helical membrane pass occupies residues 56-76 (LSVTLTGGAMFVGLMVGGVLA). Residues 77 to 83 (DRYERKK) are Cytoplasmic-facing. Residues 84-104 (VILLARGTCGIGFIGLCLNAL) form a helical membrane-spanning segment. At 105 to 109 (LPEPS) the chain is on the periplasmic side. The helical transmembrane segment at 110–130 (LLAIYLLGLWDGFFASLGVTA) threads the bilayer. The Cytoplasmic segment spans residues 131–156 (LLAATPALVGRENLMQAGALTMLTVR). Residues 157-177 (LGSVISPMIGGLLLATGGVAW) traverse the membrane as a helical segment. Asn-178 is a topological domain (periplasmic). A helical membrane pass occupies residues 179–199 (YGLAAAGTFITLLPLLSLPAL). The Cytoplasmic portion of the chain corresponds to 200–218 (PPPPQPREHPLKSLLAGFR). A helical membrane pass occupies residues 219-239 (FLLASPLVGGIALLGGLLTMA). At 240–256 (SAVRVLYPALADNWQMS) the chain is on the periplasmic side. A helical membrane pass occupies residues 257–277 (AAEIGFLYAAIPLGAAIGALT). At 278–287 (SGKLAHSARP) the chain is on the cytoplasmic side. A helical membrane pass occupies residues 288 to 307 (GLLMLLSTLGSFLAIGLFGL). Topologically, residues 308 to 313 (MPMWIL) are periplasmic. A helical transmembrane segment spans residues 314-336 (GVVCLALFGWLSAVSSLLQYTML). Residues 337–356 (QTQTPEAMLGRINGLWTAQN) lie on the Cytoplasmic side of the membrane. The chain crosses the membrane as a helical span at residues 357–377 (VTGDAIGAALLGGLGAMMTPV). Ala-378 is a topological domain (periplasmic). A helical transmembrane segment spans residues 379–399 (SASASGFGLLIIGVLLLLVLV). The Cytoplasmic portion of the chain corresponds to 400–416 (ELRRFRQTPPQVTASDS).

This sequence belongs to the major facilitator superfamily. EntS (TC 2.A.1.38) family.

The protein localises to the cell inner membrane. Functionally, component of an export pathway for enterobactin. The chain is Enterobactin exporter EntS from Shigella boydii serotype 18 (strain CDC 3083-94 / BS512).